A 257-amino-acid polypeptide reads, in one-letter code: Aspartate/glutamate leucyltransferase (257 aa).

The protein belongs to the R-transferase family. Bpt subfamily.

The protein localises to the cytoplasm. The catalysed reaction is N-terminal L-glutamyl-[protein] + L-leucyl-tRNA(Leu) = N-terminal L-leucyl-L-glutamyl-[protein] + tRNA(Leu) + H(+). The enzyme catalyses N-terminal L-aspartyl-[protein] + L-leucyl-tRNA(Leu) = N-terminal L-leucyl-L-aspartyl-[protein] + tRNA(Leu) + H(+). Functions in the N-end rule pathway of protein degradation where it conjugates Leu from its aminoacyl-tRNA to the N-termini of proteins containing an N-terminal aspartate or glutamate. This is Aspartate/glutamate leucyltransferase from Rhodopseudomonas palustris (strain HaA2).